The sequence spans 377 residues: Succinyl-diaminopimelate desuccinylase (377 aa).

H67 is a binding site for Zn(2+). The active site involves D69. Position 100 (D100) interacts with Zn(2+). Residue E134 is the Proton acceptor of the active site. The Zn(2+) site is built by E135, E163, and H349.

As to quaternary structure, homodimer. The cofactor is Zn(2+).

It catalyses the reaction N-succinyl-(2S,6S)-2,6-diaminopimelate + H2O = (2S,6S)-2,6-diaminopimelate + succinate. The protein operates within amino-acid biosynthesis; L-lysine biosynthesis via DAP pathway; LL-2,6-diaminopimelate from (S)-tetrahydrodipicolinate (succinylase route): step 3/3. Competitively inhibited by L,L-DAP, D,L-DAP, 2-carboxyethylphosphonic acid (CEPA) and 5-mercaptopentanoic acid (MSPA). Succinate is a poor inhibitor. Catalyzes the hydrolysis of N-succinyl-L,L-diaminopimelic acid (SDAP), forming succinate and LL-2,6-diaminopimelate (DAP), an intermediate involved in the bacterial biosynthesis of lysine and meso-diaminopimelic acid, an essential component of bacterial cell walls. It can only hydrolyze L,L-N-succinyl-diaminopimelic acid (L,L-SDAP) and is inactive toward D,L-, L,D-, and D,D-SDAP. The polypeptide is Succinyl-diaminopimelate desuccinylase (dapE) (Haemophilus influenzae (strain ATCC 51907 / DSM 11121 / KW20 / Rd)).